The chain runs to 99 residues: Transmembrane protein 14A (99 aa).

The next 3 helical transmembrane spans lie at 1–21, 24–44, and 79–99; these read MDLIGFGYAALVTFGSILGYK, GGVLSLIAGLFVGFLAGYGAY, and PAGLVAGLSLLMILRLVLLLL.

The protein belongs to the TMEM14 family.

The protein resides in the mitochondrion membrane. The protein localises to the endoplasmic reticulum membrane. In terms of biological role, inhibits apoptosis via negative regulation of the mitochondrial outer membrane permeabilization involved in apoptotic signaling pathway. The protein is Transmembrane protein 14A (TMEM14A) of Bos taurus (Bovine).